The sequence spans 494 residues: UDP-N-acetylmuramoyl-L-alanyl-D-glutamate--L-lysine ligase (494 aa).

Ser-30 contacts UDP-N-acetyl-alpha-D-muramoyl-L-alanyl-D-glutamate. Residue 110–116 (GTNGKTS) coordinates ATP. Residues 152–153 (TT), Ser-179, and Arg-187 each bind UDP-N-acetyl-alpha-D-muramoyl-L-alanyl-D-glutamate. Lys-219 carries the N6-carboxylysine modification. The L-lysine recognition motif motif lies at 406–409 (DNPA).

The protein belongs to the MurCDEF family. MurE subfamily. Post-translationally, carboxylation is probably crucial for Mg(2+) binding and, consequently, for the gamma-phosphate positioning of ATP.

The protein localises to the cytoplasm. The catalysed reaction is UDP-N-acetyl-alpha-D-muramoyl-L-alanyl-D-glutamate + L-lysine + ATP = UDP-N-acetyl-alpha-D-muramoyl-L-alanyl-gamma-D-glutamyl-L-lysine + ADP + phosphate + H(+). The protein operates within cell wall biogenesis; peptidoglycan biosynthesis. In terms of biological role, catalyzes the addition of L-lysine to the nucleotide precursor UDP-N-acetylmuramoyl-L-alanyl-D-glutamate (UMAG) in the biosynthesis of bacterial cell-wall peptidoglycan. The protein is UDP-N-acetylmuramoyl-L-alanyl-D-glutamate--L-lysine ligase of Staphylococcus aureus (strain Mu3 / ATCC 700698).